The following is a 499-amino-acid chain: Neuronal acetylcholine receptor subunit alpha-3 (499 aa).

The signal sequence occupies residues 1–25 (MGVVLPPPPLSMLMLVLMLLPVASA). Over 26-244 (SEAEHRLFQY…PLFYTINLII (219 aa)) the chain is Extracellular. N-linked (GlcNAc...) asparagine glycosylation is found at Asn49 and Asn166. Intrachain disulfides connect Cys153-Cys167 and Cys217-Cys218. Residues 245–260 (PCLLISFLTVLVFYLP) traverse the membrane as a helical segment. Over 261–262 (SD) the chain is Cytoplasmic. The chain crosses the membrane as a helical span at residues 263–279 (CGEKVTLCISVLLSLTV). Glu265 is a Na(+) binding site. At 280–301 (FLLVITETIPSTSLVIPLIGEY) the chain is on the extracellular side. Residues 302–320 (LLFTMIFVTLSIVITVFVL) form a helical membrane-spanning segment. Over 321–468 (NVHYRTPTTH…QDDWKYVAMV (148 aa)) the chain is Cytoplasmic. Phosphoserine occurs at positions 407 and 410. The chain crosses the membrane as a helical span at residues 469–487 (IDRIFLWVFILVCILGTAG). The Extracellular segment spans residues 488–499 (LFLQPLMARDDT).

This sequence belongs to the ligand-gated ion channel (TC 1.A.9) family. Acetylcholine receptor (TC 1.A.9.1) subfamily. Alpha-3/CHRNA3 sub-subfamily. As to quaternary structure, neuronal AChR is composed of two different types of subunits: alpha and beta. CHRNA3/Alpha-3 subunit can be combined to CHRNB2/beta-2 or CHRNB4/beta-4 to give rise to functional receptors. Part of a complex composed of STUB1/CHIP, VCP/p97, CHRNA3, and UBXN2A that modulates the ubiquitination and endoplasmic reticulum-associated degradation (ERAD) of CHRNA3. Within the complex UBXN2A acts as a scaffold protein required for the interaction of CHRNA3 with VCP/p97, this interaction also inhibits CHRNA3 ubiquitination by STUB1/CHIP and subsequently ERAD. Interacts with UBXN2A (via SEP domain), the interaction is required for the interaction of CHRNA3 in the STUB1:VCP:UBXN2A complex. Interacts with RIC3; which is required for proper folding and assembly. Interacts with LYPD6. In terms of processing, ubiquitinated; by STUB1/CHIP and thereafter degraded by the 26S proteosome complex. Expressed in the brain (at protein level).

It localises to the synaptic cell membrane. It is found in the cell membrane. The protein resides in the endoplasmic reticulum. Its subcellular location is the golgi apparatus. The catalysed reaction is K(+)(in) = K(+)(out). The enzyme catalyses Na(+)(in) = Na(+)(out). It catalyses the reaction Ca(2+)(in) = Ca(2+)(out). Its activity is regulated as follows. Activated by a myriad of ligands such as acetylcholine, cytisine, nicotine, choline and epibatidine. The heteropentamer CHRNA3:CHRNB2 activity is blocked by alpha-conotoxins ImI, ImII, PnIA, GID and MII. The heteropentamer CHRNA3:CHRNB4 activity is blocked by the alpha-conotoxin ImI. In terms of biological role, component of neuronal acetylcholine receptors (nAChRs) that function as pentameric, ligand-gated cation channels with high calcium permeability among other activities. nAChRs are excitatory neurotrasnmitter receptors formed by a collection of nAChR subunits known to mediate synaptic transmission in the nervous system and the neuromuscular junction. Each nAchR subunit confers differential attributes to channel properties, including activation, deactivation and desensitization kinetics, pH sensitivity, cation permeability, and binding to allosteric modulators. CHRNA3 forms heteropentameric neuronal acetylcholine receptors with CHRNA5, CHRNB2 and CHRNB4. CHRNA3:CHRNB4 being predominant in neurons of the autonomic ganglia, it is known as ganglionic nicotinic receptor. CHRNA3:CHRNB4 or CHRNA3:CHRNA5:CHRNB4 play also an important role in the habenulo-interpeduncular tract, modulating the mesolimbic dopamine system and affecting reward circuits and addiction. Hypothalamic CHRNA3:CHRNB4 nAChR activation by nicotine leads to activation of POMC neurons and a decrease in food intake. Also expressed in the urothelium where it modulates reflex bladder activity by increasing intracellular calcium through extracellular influx and basal ATP release. The protein is Neuronal acetylcholine receptor subunit alpha-3 (Chrna3) of Mus musculus (Mouse).